A 96-amino-acid chain; its full sequence is Ribonuclease P protein component 1 (96 aa).

This sequence belongs to the eukaryotic/archaeal RNase P protein component 1 family. Consists of a catalytic RNA component and at least 5 protein subunits.

The protein localises to the cytoplasm. The catalysed reaction is Endonucleolytic cleavage of RNA, removing 5'-extranucleotides from tRNA precursor.. In terms of biological role, part of ribonuclease P, a protein complex that generates mature tRNA molecules by cleaving their 5'-ends. In Methanococcus maripaludis (strain DSM 14266 / JCM 13030 / NBRC 101832 / S2 / LL), this protein is Ribonuclease P protein component 1.